We begin with the raw amino-acid sequence, 300 residues long: Coatomer subunit epsilon (300 aa).

This sequence belongs to the COPE family. Oligomeric complex that consists of at least the alpha, beta, beta', gamma, delta, epsilon and zeta subunits.

It localises to the cytoplasm. Its subcellular location is the golgi apparatus membrane. It is found in the cytoplasmic vesicle. The protein localises to the COPI-coated vesicle membrane. Its function is as follows. The coatomer is a cytosolic protein complex that binds to dilysine motifs and reversibly associates with Golgi non-clathrin-coated vesicles, which further mediate biosynthetic protein transport from the ER, via the Golgi up to the trans Golgi network. The coatomer complex is required for budding from Golgi membranes, and is essential for the retrograde Golgi-to-ER transport of dilysine-tagged proteins. The polypeptide is Coatomer subunit epsilon (cope) (Dictyostelium discoideum (Social amoeba)).